Consider the following 143-residue polypeptide: Regulator of ribonuclease activity B (143 aa).

The segment covering 117-135 (DPDAEYDDEDGENEDDESE) has biased composition (acidic residues). Residues 117-143 (DPDAEYDDEDGENEDDESESDKSSRLH) are disordered.

Belongs to the RraB family. Interacts with the C-terminal region of Rne.

It localises to the cytoplasm. Functionally, globally modulates RNA abundance by binding to RNase E (Rne) and regulating its endonucleolytic activity. Can modulate Rne action in a substrate-dependent manner by altering the composition of the degradosome. The polypeptide is Regulator of ribonuclease activity B (Proteus mirabilis (strain HI4320)).